Reading from the N-terminus, the 361-residue chain is 45 kDa calcium-binding protein (361 aa).

Positions 1–35 (MVWLVAMTSRQRSLCGLAAHGLWFLGLVLLMDATA) are cleaved as a signal peptide. N39 carries an N-linked (GlcNAc...) asparagine glycan. EF-hand domains lie at 97-132 (RSRRKLMVIFSKVDVNTDRRISAKEMQHWIMEKTAE) and 136-171 (EAVKENKLHFRAVDPDGDGHVSWDEYKVKFLASKGH). At S98 the chain carries Phosphoserine. The Ca(2+) site is built by D110, N112, D114, R116, E121, D149, D151, D153, H155, and E160. At T192 the chain carries Phosphothreonine. EF-hand domains are found at residues 196–231 (LGNLRDRWYQADNPPADLLLTEDEFLSFLHPEHSRG), 232–267 (MLKFMVKEIVRDLDQDGDKQLSLPEFISLPVGTVEN), 277–312 (WVKDRKKEFEELIDSNHDGIVTMEELENYMDPMNEY), and 313–348 (NALNEAKQMIAIADENQNHHLEPEEILKYSEFFTGS). D212 is a Ca(2+) binding site. T216 carries the phosphothreonine modification. Positions 219, 245, 247, 249, 251, and 256 each coordinate Ca(2+). T264 is modified (phosphothreonine). Ca(2+)-binding residues include D290, N292, and D294. T298 is modified (phosphothreonine). E301, D326, N328, N330, H332, and E337 together coordinate Ca(2+). The tract at residues 308–361 (PMNEYNALNEAKQMIAIADENQNHHLEPEEILKYSEFFTGSKLMDYARNVHEEF) is necessary for intracellular retention in Golgi apparatus lumen.

It belongs to the CREC family. In terms of assembly, a membrane-associated isoform interacts with STX3 and STXBP1. As to expression, a membrane-associated isoform is expressed in acini of the pancreas (at protein level). Ubiquitous.

Its subcellular location is the golgi apparatus lumen. A membrane-associated isoform may be involved in the exocytosis of zymogens by pancreatic acini. May regulate calcium-dependent activities in the endoplasmic reticulum lumen or post-ER compartment. The sequence is that of 45 kDa calcium-binding protein (Sdf4) from Rattus norvegicus (Rat).